A 608-amino-acid polypeptide reads, in one-letter code: UvrABC system protein C (608 aa).

Residues 13–91 (HKPGVYIMHD…IKKNSPKYNI (79 aa)) enclose the GIY-YIG domain. The 36-residue stretch at 202–237 (DELTKKLTDKMMAASKNLNFELAAKLRDSITNIQVI) folds into the UVR domain.

It belongs to the UvrC family. Interacts with UvrB in an incision complex.

The protein resides in the cytoplasm. The UvrABC repair system catalyzes the recognition and processing of DNA lesions. UvrC both incises the 5' and 3' sides of the lesion. The N-terminal half is responsible for the 3' incision and the C-terminal half is responsible for the 5' incision. This Finegoldia magna (strain ATCC 29328 / DSM 20472 / WAL 2508) (Peptostreptococcus magnus) protein is UvrABC system protein C.